A 695-amino-acid chain; its full sequence is Zinc finger SWIM domain-containing protein 3 (695 aa).

A disordered region spans residues 434–490 (NAPKLRRTRLPSTPPRPKKPFRICGGGDTRLPVEEVEETKADSAQSQLPQPQDQSSK). Residues 475–489 (DSAQSQLPQPQDQSS) are compositionally biased toward low complexity. The segment at 530–571 (VAVQLLENSHQVSKDGCSCSCSFQQCYHLPCRHILALLHTSQ) adopts an SWIM-type zinc-finger fold.

This chain is Zinc finger SWIM domain-containing protein 3 (Zswim3), found in Mus musculus (Mouse).